The chain runs to 231 residues: DNA mismatch repair protein MutH (231 aa).

It belongs to the MutH family.

Its subcellular location is the cytoplasm. In terms of biological role, sequence-specific endonuclease that cleaves unmethylated GATC sequences. It is involved in DNA mismatch repair. The polypeptide is DNA mismatch repair protein MutH (Salmonella paratyphi C (strain RKS4594)).